Here is a 190-residue protein sequence, read N- to C-terminus: Large ribosomal subunit protein uL6A (190 aa).

The protein belongs to the universal ribosomal protein uL6 family. As to quaternary structure, component of the large ribosomal subunit (LSU). Mature yeast ribosomes consist of a small (40S) and a large (60S) subunit. The 40S small subunit contains 1 molecule of ribosomal RNA (18S rRNA) and at least 33 different proteins. The large 60S subunit contains 3 rRNA molecules (25S, 5.8S and 5S rRNA) and at least 46 different proteins. uL6 lines the binding pocket for eukaryotic elongation factor 2 (eEF2).

The protein localises to the cytoplasm. Its subcellular location is the nucleus. Component of the ribosome, a large ribonucleoprotein complex responsible for the synthesis of proteins in the cell. The small ribosomal subunit (SSU) binds messenger RNAs (mRNAs) and translates the encoded message by selecting cognate aminoacyl-transfer RNA (tRNA) molecules. The large subunit (LSU) contains the ribosomal catalytic site termed the peptidyl transferase center (PTC), which catalyzes the formation of peptide bonds, thereby polymerizing the amino acids delivered by tRNAs into a polypeptide chain. The nascent polypeptides leave the ribosome through a tunnel in the LSU and interact with protein factors that function in enzymatic processing, targeting, and the membrane insertion of nascent chains at the exit of the ribosomal tunnel. This is Large ribosomal subunit protein uL6A (rpl901) from Schizosaccharomyces pombe (strain 972 / ATCC 24843) (Fission yeast).